The primary structure comprises 305 residues: Mitochondrial brown fat uncoupling protein 1 (305 aa).

Residues 1–10 (MVGHAATDVP) are Mitochondrial intermembrane-facing. The chain crosses the membrane as a helical span at residues 11–32 (PTMAVKIFSAGVAACVADIITF). Solcar repeat units lie at residues 11 to 102 (PTMA…VQEF), 109 to 199 (ASLG…MKEA), and 208 to 293 (DDVP…LKRE). Residues 33-73 (PLDTAKVRLQIQGECLTSSAFRYKGVLGTIITLAKTEGPVK) are Mitochondrial matrix-facing. K56 is a fatty acid 16:0 binding site. Residues 74–96 (LYSGLPAGLQRQISFASLRIGLY) form a helical membrane-spanning segment. Over 97–114 (DTVQEFFTTGKEASLGSK) the chain is Mitochondrial intermembrane. A helical transmembrane segment spans residues 115–131 (ISAGLTTGGVAVFIGQP). The Mitochondrial matrix portion of the chain corresponds to 132-176 (TEVVKVRLQAQSHLHGPKPRYTGTYNAYRIIATTEGLTGLWKGTT). A helical transmembrane segment spans residues 177 to 193 (PNLTRNVIINCTELVTY). Over 194–210 (DLMKEALVKNKLLADDV) the chain is Mitochondrial intermembrane. Residues 211–230 (PCHFVSAVVAGFCTTVLSSP) traverse the membrane as a helical segment. Residues 231–264 (VDVVKTRFVNSSPGQYTSVPNCAMMMLTREGPSA) lie on the Mitochondrial matrix side of the membrane. C252 carries the cysteine sulfenic acid (-SOH) modification. Residues 265–287 (FFKGFVPSFLRLGSWNIIMFVCF) traverse the membrane as a helical segment. Residue K267 participates in fatty acid 16:0 binding. Residues 288-305 (EQLKRELMKSRQAMDCAT) are Mitochondrial intermembrane-facing.

This sequence belongs to the mitochondrial carrier (TC 2.A.29) family. Most probably functions as a monomer. Binds one purine nucleotide per monomer. However, has also been suggested to function as a homodimer or a homotetramer. Tightly associates with cardiolipin in the mitochondrion inner membrane; may stabilize and regulate its activity. Post-translationally, may undergo sulfenylation upon cold exposure. May increase the sensitivity of UCP1 thermogenic function to the activation by noradrenaline probably through structural effects. May undergo ubiquitin-mediated proteasomal degradation.

It localises to the mitochondrion inner membrane. It carries out the reaction H(+)(in) = H(+)(out). Has no constitutive proton transporter activity and has to be activated by long-chain fatty acids/LCFAs. Inhibited by purine nucleotides. Both purine nucleotides and LCFAs bind the cytosolic side of the transporter and directly compete to activate or inhibit it. Activated by noradrenaline and reactive oxygen species. Despite lacking canonical translational encoding for selenocysteine, a small pool of the protein has been observed to selectively incorporate selenocysteine at 'Cys-252'. Selenocysteine-modified protein is highly sensitive to redox modification and may constitute a pool of protein highly sensitive to activation by elevated levels of reactive oxygen species (ROS). Its function is as follows. Mitochondrial protein responsible for thermogenic respiration, a specialized capacity of brown adipose tissue and beige fat that participates in non-shivering adaptive thermogenesis to temperature and diet variations and more generally to the regulation of energy balance. Functions as a long-chain fatty acid/LCFA and proton symporter, simultaneously transporting one LCFA and one proton through the inner mitochondrial membrane. However, LCFAs remaining associated with the transporter via their hydrophobic tails, it results in an apparent transport of protons activated by LCFAs. Thereby, dissipates the mitochondrial proton gradient and converts the energy of substrate oxydation into heat instead of ATP. Regulates the production of reactive oxygen species/ROS by mitochondria. The protein is Mitochondrial brown fat uncoupling protein 1 of Ovis aries (Sheep).